Reading from the N-terminus, the 522-residue chain is Pectinesterase/pectinesterase inhibitor PPE8B (522 aa).

The first 30 residues, 1 to 30 (MPYLLMASHNPLPAGKQLLLLVLLCAFFSS), serve as a signal peptide directing secretion. The pectinesterase inhibitor PPE8B stretch occupies residues 31-174 (SFIPFASCSI…TSLVQELLTQ (144 aa)). N-linked (GlcNAc...) asparagine glycosylation is found at Asn-105, Asn-118, Asn-119, Asn-218, Asn-221, and Asn-274. A pectinesterase PPE8B region spans residues 208 to 506 (DAIVAQDGTG…YTVAQFIEGN (299 aa)). Substrate contacts are provided by Thr-283 and Gln-313. The Proton donor; for pectinesterase activity role is filled by Asp-336. Cys-350 and Cys-370 are disulfide-bonded. Catalysis depends on Asp-357, which acts as the Nucleophile; for pectinesterase activity. Asn-405 is a glycosylation site (N-linked (GlcNAc...) asparagine). Substrate contacts are provided by Arg-426 and Trp-428. Residues Asn-489 and Asn-496 are each glycosylated (N-linked (GlcNAc...) asparagine).

In the N-terminal section; belongs to the PMEI family. This sequence in the C-terminal section; belongs to the pectinesterase family.

It localises to the secreted. The protein resides in the cell wall. The enzyme catalyses [(1-&gt;4)-alpha-D-galacturonosyl methyl ester](n) + n H2O = [(1-&gt;4)-alpha-D-galacturonosyl](n) + n methanol + n H(+). It functions in the pathway glycan metabolism; pectin degradation; 2-dehydro-3-deoxy-D-gluconate from pectin: step 1/5. Functionally, may have roles in the deposition of pectin in developing tissues and in the wall loosening and cell separation that occurs in cell expansion, fruit ripening and abscission. In Prunus persica (Peach), this protein is Pectinesterase/pectinesterase inhibitor PPE8B.